A 459-amino-acid chain; its full sequence is MLLDLNRFSFPVFLKEVRLLTTLALPMLLAQVAQVGIGFVDTVMAGGAGKEDLAAVALGSSAFATVYITFMGIMAALNPMIAQLYGAGKTDEVGETGRQGIWFGLFLGVFGMVLMWAAITPFRNWLTLSDYVEGTMAQYMLFTSLAMPAAMVHRALHAYTSSLNRPRLIMLVSFAAFVLNVPLNYIFVYGKFGMPALGGAGCGLATMAVFWFSALALWIYIAKENFFRPFGLTAKFGKPDWAVFKQIWKIGAPIGLSYFLEASAFSFIVFLIAPFGEDYVAAQQVGISLSGILYMIPQSVGSAGTVRIGFSLGRREFSRARYISGVSLVLGWMLAVITVLSLVLFRSPLVSMYNNDPAVLSIAATVLLFAGLFQPADFTQCIASYALRGYKVTKVPMFIHAAAFWGCGLLPGYLLAYRFNMGIYGFWTALIASLTIAAIALVWCLELCSREMVRSHKAV.

12 helical membrane passes run 20-40 (LTTL…IGFV), 53-73 (LAAV…FMGI), 100-120 (GIWF…AAIT), 132-152 (VEGT…AAMV), 168-188 (LIML…YIFV), 202-222 (CGLA…IYIA), 254-274 (IGLS…LIAP), 286-306 (GISL…AGTV), 325-345 (GVSL…LVLF), 358-378 (AVLS…PADF), 395-415 (VPMF…GYLL), and 423-443 (IYGF…ALVW).

This sequence belongs to the multi antimicrobial extrusion (MATE) (TC 2.A.66.1) family.

The protein localises to the cell inner membrane. Its function is as follows. Multidrug efflux pump. This is Probable multidrug resistance protein NorM (norM) from Neisseria meningitidis serogroup B (strain ATCC BAA-335 / MC58).